Reading from the N-terminus, the 67-residue chain is Large ribosomal subunit protein bL28 (67 aa).

The protein belongs to the bacterial ribosomal protein bL28 family.

This Nitratiruptor sp. (strain SB155-2) protein is Large ribosomal subunit protein bL28.